Here is a 205-residue protein sequence, read N- to C-terminus: Lymphotoxin-alpha (205 aa).

Residues Met1 to Gly34 form the signal peptide. Thr41 is a glycosylation site (O-linked (GalNAc...) threonine). The 143-residue stretch at Pro63–Leu205 folds into the THD domain. The N-linked (GlcNAc...) asparagine glycan is linked to Asn96.

This sequence belongs to the tumor necrosis factor family. Homotrimer, and heterotrimer of either two LTB and one LTA subunits or (less prevalent) two LTA and one LTB subunits. Interacts with TNFRSF14.

It localises to the secreted. It is found in the membrane. In terms of biological role, cytokine that in its homotrimeric form binds to TNFRSF1A/TNFR1, TNFRSF1B/TNFBR and TNFRSF14/HVEM. In its heterotrimeric form with LTB binds to TNFRSF3/LTBR. Lymphotoxin is produced by lymphocytes and is cytotoxic for a wide range of tumor cells in vitro and in vivo. This is Lymphotoxin-alpha (LTA) from Macaca mulatta (Rhesus macaque).